The following is a 354-amino-acid chain: Glycerol-3-phosphate dehydrogenase [NAD(+)], glycosomal (354 aa).

NAD(+)-binding positions include 15-20, F90, K118, and A150; that span reads GSGAFG. Residue K118 coordinates substrate. The active-site Proton acceptor is the K203. Residues R267 and E293 each coordinate NAD(+). 267 to 268 serves as a coordination point for substrate; the sequence is RN. A Microbody targeting signal motif is present at residues 352–354; the sequence is SKM.

The protein belongs to the NAD-dependent glycerol-3-phosphate dehydrogenase family.

The protein resides in the glycosome. The enzyme catalyses sn-glycerol 3-phosphate + NAD(+) = dihydroxyacetone phosphate + NADH + H(+). The polypeptide is Glycerol-3-phosphate dehydrogenase [NAD(+)], glycosomal (GPD) (Trypanosoma brucei rhodesiense).